The sequence spans 72 residues: UPF0270 protein YheU (72 aa).

The protein belongs to the UPF0270 family.

The chain is UPF0270 protein YheU from Escherichia coli (strain UTI89 / UPEC).